We begin with the raw amino-acid sequence, 419 residues long: Probable pectate lyase C (419 aa).

The N-terminal stretch at 1 to 19 (MRLTPSLISCLSLLHFTSA) is a signal peptide. 3 N-linked (GlcNAc...) asparagine glycosylation sites follow: Asn48, Asn164, and Asn201. Arg204 is an active-site residue. In terms of domain architecture, EF-hand spans 261–296 (NENFHAYVETNYYDSDKDGTLNGSELGVDSTNYGGM). Residues Asp274, Asp276, Asp278, and Thr280 each coordinate Ca(2+). Residue Asn282 is glycosylated (N-linked (GlcNAc...) asparagine). Glu285 is a Ca(2+) binding site. Positions 350-395 (ALISDEADMGGAGDLDQGTTPTDTDGDGIPDDAEAELGTDPNTADS) are disordered. Low complexity predominate over residues 363 to 372 (DLDQGTTPTD). Positions 373–386 (TDGDGIPDDAEAEL) are enriched in acidic residues.

Belongs to the polysaccharide lyase 1 family. Requires Ca(2+) as cofactor.

Its subcellular location is the secreted. The catalysed reaction is Eliminative cleavage of (1-&gt;4)-alpha-D-galacturonan to give oligosaccharides with 4-deoxy-alpha-D-galact-4-enuronosyl groups at their non-reducing ends.. Functionally, pectinolytic enzyme consist of four classes of enzymes: pectin lyase, polygalacturonase, pectin methylesterase and rhamnogalacturonase. Among pectinolytic enzymes, pectin lyase is the most important in depolymerization of pectin, since it cleaves internal glycosidic bonds of highly methylated pectins. Favors pectate, the anion, over pectin, the methyl ester. The chain is Probable pectate lyase C (plyC) from Aspergillus flavus (strain ATCC 200026 / FGSC A1120 / IAM 13836 / NRRL 3357 / JCM 12722 / SRRC 167).